Here is a 553-residue protein sequence, read N- to C-terminus: Hyaluronan synthase 3 (553 aa).

The Cytoplasmic segment spans residues 1–15 (MPVQLTTALRVVGTS). A helical membrane pass occupies residues 16-36 (LFALAVLGGILAAYVTGYQFI). The Extracellular portion of the chain corresponds to 37 to 44 (HTEKHYLS). Residues 45 to 65 (FGLYGAILGLHLLIQSLFAFL) form a helical membrane-spanning segment. At 66 to 377 (EHRRMRRAGQ…NSLWFHKHHL (312 aa)) the chain is on the cytoplasmic side. The chain crosses the membrane as a helical span at residues 378–398 (WMTYESVVTGFFPFFLIATVI). Topologically, residues 399 to 408 (QLFYRGRIWN) are extracellular. The chain crosses the membrane as a helical span at residues 409–429 (ILLFLLTVQLVGIIKATYACF). Over 430-440 (LRGNAEMIFMS) the chain is Cytoplasmic. Residues 441-461 (LYSLLYMSSLLPAKIFAIATI) traverse the membrane as a helical segment. N-linked (GlcNAc...) asparagine glycosylation is present at Asn462. Over 462–473 (NKSGWGTSGRKT) the chain is Extracellular. Residues 474–494 (IVVNFIGLIPVSIWVAVLLGG) form a helical membrane-spanning segment. Over 495–515 (LAYTAYCQDLFSETELAFLVS) the chain is Cytoplasmic. A helical membrane pass occupies residues 516–536 (GAILYGCYWVALLMLYLAIIA). The Extracellular portion of the chain corresponds to 537–553 (RRCGKKPEQYSLAFAEV).

This sequence belongs to the NodC/HAS family. In terms of assembly, homodimers. Forms heterodimers with HAS2 and HAS1. It depends on Mg(2+) as a cofactor. In terms of processing, O-GlcNAcylation increases the hyaluronan synthase activity, HAS3 stability and its plasma membrane residence. The concentration of UDP-GlcNAc controls the level of O-GlcNAc modification.

Its subcellular location is the cell membrane. The protein localises to the golgi apparatus membrane. It is found in the golgi apparatus. It localises to the trans-Golgi network membrane. The protein resides in the early endosome. It catalyses the reaction [hyaluronan](n) + UDP-N-acetyl-alpha-D-glucosamine = N-acetyl-beta-D-glucosaminyl-(1-&gt;4)-[hyaluronan](n) + UDP + H(+). It carries out the reaction N-acetyl-beta-D-glucosaminyl-(1-&gt;4)-[hyaluronan](n) + UDP-alpha-D-glucuronate = [hyaluronan](n+1) + UDP + H(+). The protein operates within glycan biosynthesis; hyaluronan biosynthesis. With respect to regulation, the enzymatic activity depends on the availability of cytosolic levels of UDP-GlcUA and UDP-GlcNAc. Functionally, catalyzes the addition of GlcNAc or GlcUA monosaccharides to the nascent hyaluronan polymer. Therefore, it is essential to hyaluronan synthesis a major component of most extracellular matrices that has a structural role in tissues architectures and regulates cell adhesion, migration and differentiation. This is one of three isoenzymes responsible for cellular hyaluronan synthesis. The sequence is that of Hyaluronan synthase 3 from Homo sapiens (Human).